Reading from the N-terminus, the 142-residue chain is UPF0102 protein Bcep18194_A3391 (142 aa).

Residues 1 to 27 (MCHAAPARPGDGRGLPRAGDNFSGAAR) are disordered.

It belongs to the UPF0102 family.

The sequence is that of UPF0102 protein Bcep18194_A3391 from Burkholderia lata (strain ATCC 17760 / DSM 23089 / LMG 22485 / NCIMB 9086 / R18194 / 383).